The sequence spans 224 residues: V-type ATP synthase subunit D (224 aa).

Positions 190 to 224 are disordered; sequence REAGYTQKKIKAKIEGKNKEAREAAAATSHGSAAD. Residues 201–212 are compositionally biased toward basic and acidic residues; it reads AKIEGKNKEARE. The segment covering 213–224 has biased composition (low complexity); that stretch reads AAAATSHGSAAD.

The protein belongs to the V-ATPase D subunit family.

Produces ATP from ADP in the presence of a proton gradient across the membrane. This is V-type ATP synthase subunit D (atpD) from Deinococcus radiodurans (strain ATCC 13939 / DSM 20539 / JCM 16871 / CCUG 27074 / LMG 4051 / NBRC 15346 / NCIMB 9279 / VKM B-1422 / R1).